A 169-amino-acid polypeptide reads, in one-letter code: Ribosome maturation factor RimM (169 aa).

The region spanning 95–168 (PPDTAYIHDL…EMTIRRFDEF (74 aa)) is the PRC barrel domain.

It belongs to the RimM family. In terms of assembly, binds ribosomal protein uS19.

The protein resides in the cytoplasm. In terms of biological role, an accessory protein needed during the final step in the assembly of 30S ribosomal subunit, possibly for assembly of the head region. Essential for efficient processing of 16S rRNA. May be needed both before and after RbfA during the maturation of 16S rRNA. It has affinity for free ribosomal 30S subunits but not for 70S ribosomes. The chain is Ribosome maturation factor RimM from Prosthecochloris aestuarii (strain DSM 271 / SK 413).